A 349-amino-acid polypeptide reads, in one-letter code: tRNA pseudouridine synthase D (349 aa).

Phe-26 contributes to the substrate binding site. Catalysis depends on Asp-79, which acts as the Nucleophile. Asn-128 contributes to the substrate binding site. In terms of domain architecture, TRUD spans 154 to 303 (GVPNYFGSQR…VDAARRAMLV (150 aa)). Phe-329 provides a ligand contact to substrate.

It belongs to the pseudouridine synthase TruD family.

The catalysed reaction is uridine(13) in tRNA = pseudouridine(13) in tRNA. Its function is as follows. Responsible for synthesis of pseudouridine from uracil-13 in transfer RNAs. This chain is tRNA pseudouridine synthase D, found in Erwinia tasmaniensis (strain DSM 17950 / CFBP 7177 / CIP 109463 / NCPPB 4357 / Et1/99).